A 585-amino-acid polypeptide reads, in one-letter code: Potassium-transporting ATPase potassium-binding subunit (585 aa).

12 consecutive transmembrane segments (helical) span residues 25 to 45 (IIIF…SFYI), 84 to 104 (YFIN…LVIM), 152 to 172 (FVIT…SMAF), 194 to 214 (IFDL…LAGV), 275 to 295 (LEFV…GIVF), 307 to 327 (VIMF…YVGV), 345 to 365 (AIGV…STGA), 368 to 388 (GALV…LLLN), 397 to 417 (GVLN…LMVG), 437 to 457 (LSLV…LMIP), 502 to 522 (LDGV…LVIA), and 547 to 567 (LLLI…IIVL).

It belongs to the KdpA family. In terms of assembly, the system is composed of three essential subunits: KdpA, KdpB and KdpC.

The protein resides in the cell membrane. Its function is as follows. Part of the high-affinity ATP-driven potassium transport (or Kdp) system, which catalyzes the hydrolysis of ATP coupled with the electrogenic transport of potassium into the cytoplasm. This subunit binds the extracellular potassium ions and delivers the ions to the membrane domain of KdpB through an intramembrane tunnel. The chain is Potassium-transporting ATPase potassium-binding subunit from Thermoplasma volcanium (strain ATCC 51530 / DSM 4299 / JCM 9571 / NBRC 15438 / GSS1).